Here is a 367-residue protein sequence, read N- to C-terminus: MLYHLIRPLLFRLDAERAHDVVTAMFRATSRMPLLPRLISALYAWDDPALMVEWAGLRFASPLGVAAGFDKRADLVDALALLGFSHVEVGTVTPRPQPGNPGPRLFRLPEDMALINRLGFNSHGMVAVAKALRARRSRRVIVGVNIGKNRDTPLERAVEDYAATFVALAPLADYVAVNISSPNTPGLRRLHERAALEELLRELMRLNHGLLYPRPIALKISPDETLDQIEEVVRAGCEAGVAAFIATNTTLAREGLRSRLANETGGLSGRPLAPRARQVIRAIYRLTRGTPPVIGVGGVLTADDAYAHIRAGARLVQLYTGMVYAGPAIAREIKRGLAQLLRRDGFVSVTQATGVDAEWEGAIRQRG.

Residues 67–71 (AGFDK) and threonine 91 each bind FMN. Lysine 71 is a substrate binding site. 116–120 (NRLGF) serves as a coordination point for substrate. 2 residues coordinate FMN: asparagine 145 and asparagine 178. Asparagine 178 contacts substrate. Catalysis depends on serine 181, which acts as the Nucleophile. Asparagine 183 provides a ligand contact to substrate. 2 residues coordinate FMN: lysine 219 and threonine 247. 248 to 249 (NT) lines the substrate pocket. Residues glycine 269, glycine 298, and 319-320 (YT) contribute to the FMN site.

Belongs to the dihydroorotate dehydrogenase family. Type 2 subfamily. Monomer. FMN is required as a cofactor.

The protein resides in the cell membrane. It carries out the reaction (S)-dihydroorotate + a quinone = orotate + a quinol. The protein operates within pyrimidine metabolism; UMP biosynthesis via de novo pathway; orotate from (S)-dihydroorotate (quinone route): step 1/1. Catalyzes the conversion of dihydroorotate to orotate with quinone as electron acceptor. The sequence is that of Dihydroorotate dehydrogenase (quinone) from Roseiflexus castenholzii (strain DSM 13941 / HLO8).